The chain runs to 885 residues: Cytosolic carboxypeptidase-like protein 5 (885 aa).

One can recognise a Peptidase M14 domain in the interval 150–576 (YPFSYAECQD…AVAVAALDMA (427 aa)). Histidine 247 and glutamate 250 together coordinate Zn(2+). Disordered regions lie at residues 341–364 (SGSA…TERE) and 392–428 (ESWE…QVPP). A compositionally biased stretch (polar residues) spans 344 to 356 (ALKTSNQSNTSPP). Residues 393-408 (SWEKSGVQREAEHSDE) are compositionally biased toward basic and acidic residues. Residues 411 to 428 (SAQSRGETNSAPSEQVPP) are compositionally biased toward polar residues. Histidine 440 is a Zn(2+) binding site. Catalysis depends on glutamate 522, which acts as the Proton donor/acceptor. Residues 606–668 (STGLTSNNRR…KSSPSFTFGT (63 aa)) show a composition bias toward polar residues. 2 disordered regions span residues 606–788 (STGL…RTAL) and 866–885 (ALLK…SLPT). Over residues 682–691 (RECKAQEKRR) the composition is skewed to basic and acidic residues. Low complexity predominate over residues 712–749 (LSAPVRAPLSPSSSSSSSSSSPSSSSSAPGPGSISLAG).

It belongs to the peptidase M14 family. The cofactor is Zn(2+).

It is found in the cytoplasm. Its subcellular location is the cytosol. The protein localises to the nucleus. It localises to the cytoskeleton. The protein resides in the spindle. It is found in the midbody. The enzyme catalyses gamma-L-glutamyl-L-glutamyl-[protein] + H2O = L-glutamyl-[protein] + L-glutamate. It catalyses the reaction (L-glutamyl)(n+1)-gamma-L-glutamyl-L-glutamyl-[protein] + H2O = (L-glutamyl)(n)-gamma-L-glutamyl-L-glutamyl-[protein] + L-glutamate. It carries out the reaction C-terminal L-alpha-aminoacyl-L-glutamyl-[tubulin] + H2O = C-terminal L-alpha-aminoacyl-[tubulin] + L-glutamate. The catalysed reaction is C-terminal L-alpha-aminoacyl-L-glutamyl-L-glutamyl-[tubulin] + H2O = C-terminal L-alpha-aminoacyl-L-glutamyl-[tubulin] + L-glutamate. In terms of biological role, metallocarboxypeptidase that mediates deglutamylation of tubulin and non-tubulin target proteins. Catalyzes the removal of polyglutamate side chains present on the gamma-carboxyl group of glutamate residues within the C-terminal tail of alpha- and beta-tubulin. Cleaves alpha- and gamma-linked polyglutamate tubulin side-chain, as well as the branching point glutamate. Also catalyzes the removal of alpha-linked glutamate residues from the carboxy-terminus of alpha-tubulin. The protein is Cytosolic carboxypeptidase-like protein 5 (agbl5) of Danio rerio (Zebrafish).